Here is a 317-residue protein sequence, read N- to C-terminus: Glucose-6-phosphate isomerase, cytosolic 2B (317 aa).

E108 (proton donor) is an active-site residue. Residues H139 and K264 contribute to the active site.

This sequence belongs to the GPI family. In terms of assembly, homodimer.

Its subcellular location is the cytoplasm. It carries out the reaction alpha-D-glucose 6-phosphate = beta-D-fructose 6-phosphate. It participates in carbohydrate degradation; glycolysis; D-glyceraldehyde 3-phosphate and glycerone phosphate from D-glucose: step 2/4. The chain is Glucose-6-phosphate isomerase, cytosolic 2B (PGIC2-B) from Clarkia lewisii (Farewell-to-spring).